Here is a 206-residue protein sequence, read N- to C-terminus: LexA repressor (206 aa).

Positions 28-48 (RAEIATRLGFKSANAAEEHLK) form a DNA-binding region, H-T-H motif. Active-site for autocatalytic cleavage activity residues include Ser123 and Lys160.

Belongs to the peptidase S24 family. In terms of assembly, homodimer.

The enzyme catalyses Hydrolysis of Ala-|-Gly bond in repressor LexA.. In terms of biological role, represses a number of genes involved in the response to DNA damage (SOS response), including recA and lexA. In the presence of single-stranded DNA, RecA interacts with LexA causing an autocatalytic cleavage which disrupts the DNA-binding part of LexA, leading to derepression of the SOS regulon and eventually DNA repair. The protein is LexA repressor of Shewanella putrefaciens (strain CN-32 / ATCC BAA-453).